Reading from the N-terminus, the 63-residue chain is Conotoxin TxMRCL-D012 (63 aa).

A signal peptide spans M1–S19. Positions D20–S47 are excised as a propeptide. Q50 carries the pyrrolidone carboxylic acid modification.

Belongs to the conotoxin T superfamily. Post-translationally, contains 2 disulfide bonds that can be either 'C1-C3, C2-C4' or 'C1-C4, C2-C3', since these disulfide connectivities have been observed for conotoxins with cysteine framework V (for examples, see AC P0DQQ7 and AC P81755). As to expression, expressed by the venom duct.

The protein resides in the secreted. The chain is Conotoxin TxMRCL-D012 from Conus textile (Cloth-of-gold cone).